The primary structure comprises 742 residues: ATP-dependent RNA helicase DBP7 (742 aa).

Residues 45–100 (GKTVSRKRKANTTGDEGIIPGRGENSIKKLHKESSYSSEEQEKYKGRNAHNTQGRT) form a disordered region. The Q motif signature appears at 143–172 (DQFASLGVTSLLVSHLEQKMRIKKPTSIQK). A Helicase ATP-binding domain is found at 178 to 372 (IIGNAGKNDF…NVALKDYKLI (195 aa)). ATP is bound at residue 191–198 (AQTGSGKT). A DEAD box motif is present at residues 307 to 310 (DEGD). One can recognise a Helicase C-terminal domain in the interval 405 to 605 (TLAATLNNIT…ILMPAFKDVN (201 aa)). The interval 701–726 (AMGLQSSKDGNSEKKPTKENSKNKMF) is disordered. Basic and acidic residues predominate over residues 710–722 (GNSEKKPTKENSK).

This sequence belongs to the DEAD box helicase family. DDX31/DBP7 subfamily.

The protein localises to the nucleus. It localises to the nucleolus. The enzyme catalyses ATP + H2O = ADP + phosphate + H(+). Functionally, ATP-binding RNA helicase involved in the biogenesis of 60S ribosomal subunits and is required for the normal formation of 25S and 5.8S rRNAs. The protein is ATP-dependent RNA helicase DBP7 (DBP7) of Saccharomyces cerevisiae (strain YJM789) (Baker's yeast).